We begin with the raw amino-acid sequence, 517 residues long: Fatty acyl-CoA reductase wat (517 aa).

A run of 2 helical transmembrane segments spans residues 378-398 (ILCF…MVII) and 492-512 (VLHY…LYAL).

Belongs to the fatty acyl-CoA reductase family.

The protein localises to the apical cell membrane. It catalyses the reaction a long-chain fatty acyl-CoA + 2 NADPH + 2 H(+) = a long-chain primary fatty alcohol + 2 NADP(+) + CoA. Its function is as follows. Catalyzes the reduction of saturated fatty acyl-CoA to fatty alcohols. The preferred substrates are C24:0 and C26:0. Necessary for the final stages of tracheal maturation, to facilitate the transition from water-filled to gas-filled tubes. May help to maintain the integrity of the outer hydrophobic envelope of the trachea. This Drosophila melanogaster (Fruit fly) protein is Fatty acyl-CoA reductase wat.